Consider the following 106-residue polypeptide: Ig kappa-b4 chain C region (106 aa).

The 94-residue stretch at 6–99 (PSVLLFPPSK…VQGSASPIVQ (94 aa)) folds into the Ig-like domain. Residues Cys27 and Cys87 are joined by a disulfide bond. Polar residues predominate over residues 48–64 (QQSGIENSKTPQSPEDN). Residues 48-67 (QQSGIENSKTPQSPEDNTYS) are disordered.

This is Ig kappa-b4 chain C region (K-BAS) from Oryctolagus cuniculus (Rabbit).